A 569-amino-acid polypeptide reads, in one-letter code: Dihydroxy-acid dehydratase (569 aa).

Asp-80 is a binding site for Mg(2+). [2Fe-2S] cluster is bound at residue Cys-121. Mg(2+) is bound by residues Asp-122 and Lys-123. An N6-carboxylysine modification is found at Lys-123. Residue Cys-194 participates in [2Fe-2S] cluster binding. Glu-446 is a binding site for Mg(2+). Ser-472 (proton acceptor) is an active-site residue.

This sequence belongs to the IlvD/Edd family. In terms of assembly, homodimer. It depends on [2Fe-2S] cluster as a cofactor. The cofactor is Mg(2+).

The catalysed reaction is (2R)-2,3-dihydroxy-3-methylbutanoate = 3-methyl-2-oxobutanoate + H2O. It catalyses the reaction (2R,3R)-2,3-dihydroxy-3-methylpentanoate = (S)-3-methyl-2-oxopentanoate + H2O. It functions in the pathway amino-acid biosynthesis; L-isoleucine biosynthesis; L-isoleucine from 2-oxobutanoate: step 3/4. Its pathway is amino-acid biosynthesis; L-valine biosynthesis; L-valine from pyruvate: step 3/4. Functionally, functions in the biosynthesis of branched-chain amino acids. Catalyzes the dehydration of (2R,3R)-2,3-dihydroxy-3-methylpentanoate (2,3-dihydroxy-3-methylvalerate) into 2-oxo-3-methylpentanoate (2-oxo-3-methylvalerate) and of (2R)-2,3-dihydroxy-3-methylbutanoate (2,3-dihydroxyisovalerate) into 2-oxo-3-methylbutanoate (2-oxoisovalerate), the penultimate precursor to L-isoleucine and L-valine, respectively. The polypeptide is Dihydroxy-acid dehydratase (Desulforudis audaxviator (strain MP104C)).